We begin with the raw amino-acid sequence, 517 residues long: Probable G-protein coupled receptor Mth-like 4 (517 aa).

The first 18 residues, 1 to 18, serve as a signal peptide directing secretion; that stretch reads MRILLIAVLFLLMPKSNA. The Extracellular portion of the chain corresponds to 19-212; that stretch reads EIPGCDFFDT…LSSEHSRTWK (194 aa). 5 disulfides stabilise this stretch: Cys23–Cys77, Cys79–Cys84, Cys88–Cys183, Cys89–Cys100, and Cys145–Cys201. N-linked (GlcNAc...) asparagine glycosylation is present at Asn39. N-linked (GlcNAc...) asparagine glycosylation is found at Asn117 and Asn165. The chain crosses the membrane as a helical span at residues 213–233; the sequence is TVAIVISLICIILTISVYLYV. Residues 234–242 are Cytoplasmic-facing; sequence EKLRNLHGK. The chain crosses the membrane as a helical span at residues 243 to 263; sequence CFICYLASLFLGYFFLVLNVW. Over 264–272 the chain is Extracellular; that stretch reads KYSSGFCVT. Residues 273-293 form a helical membrane-spanning segment; it reads AGFLGYFSVMAAFFWLSVIGI. Over 294-319 the chain is Cytoplasmic; the sequence is HLRIKFSLASNCLHRLLPENPFRAYN. Residues 320–340 traverse the membrane as a helical segment; the sequence is LYAWGIPLIMTAITYTADQVV. Residues 341 to 363 are Extracellular-facing; sequence KNEKLRPRVGVGKNCWIYTGDMT. Residues 364–384 form a helical membrane-spanning segment; the sequence is VMIYFYGPMLLLIAFNIIMFV. Residues 385-414 lie on the Cytoplasmic side of the membrane; it reads LSAIYIYNIKKNVKGLVHKQQTNQQINDQQ. A helical membrane pass occupies residues 415-435; the sequence is MFAIFLRLFILMGLSWSFEIL. The Extracellular segment spans residues 436 to 459; the sequence is SFLLTKQQAWARALMVADYFNWSQ. An N-linked (GlcNAc...) asparagine glycan is attached at Asn456. The chain crosses the membrane as a helical span at residues 460–480; it reads GTIIFVLFILKPSILKLIIAG. The Cytoplasmic portion of the chain corresponds to 481–517; sequence GRQNLPGSHHNSRSKAARYNSTHTACEGSIADPNAYC.

The protein belongs to the G-protein coupled receptor 2 family. Mth subfamily.

It localises to the cell membrane. This Drosophila melanogaster (Fruit fly) protein is Probable G-protein coupled receptor Mth-like 4 (mthl4).